Here is a 329-residue protein sequence, read N- to C-terminus: Beta-ketoacyl-[acyl-carrier-protein] synthase III (329 aa).

Catalysis depends on residues cysteine 112 and histidine 253. The interval 254-258 (QANQR) is ACP-binding. Residue asparagine 283 is part of the active site.

This sequence belongs to the thiolase-like superfamily. FabH family. Homodimer.

The protein resides in the cytoplasm. It carries out the reaction malonyl-[ACP] + acetyl-CoA + H(+) = 3-oxobutanoyl-[ACP] + CO2 + CoA. The protein operates within lipid metabolism; fatty acid biosynthesis. Its function is as follows. Catalyzes the condensation reaction of fatty acid synthesis by the addition to an acyl acceptor of two carbons from malonyl-ACP. Catalyzes the first condensation reaction which initiates fatty acid synthesis and may therefore play a role in governing the total rate of fatty acid production. Possesses both acetoacetyl-ACP synthase and acetyl transacylase activities. Its substrate specificity determines the biosynthesis of branched-chain and/or straight-chain of fatty acids. The chain is Beta-ketoacyl-[acyl-carrier-protein] synthase III from Gloeobacter violaceus (strain ATCC 29082 / PCC 7421).